Here is a 175-residue protein sequence, read N- to C-terminus: Lipopolysaccharide export system protein LptH (175 aa).

The N-terminal stretch at 1 to 24 (MRFVNTLPLIFGLTAALGSSMALA) is a signal peptide.

Belongs to the LptA family. As to quaternary structure, component of the lipopolysaccharide transport and assembly complex. Mainly exists as a dimer in solution. Tends to oligomerize already in solution. The protomers follow one another in a head-to-tail fashion throughout the crystal lattice, yielding a continuous fiber arrangement.

It is found in the periplasm. In terms of biological role, involved in the assembly of lipopolysaccharide (LPS). Required for the translocation of LPS from the inner membrane to the outer membrane. May form a bridge between the inner membrane and the outer membrane, via interactions with LptC and LptD, thereby facilitating LPS transfer across the periplasm. Binds LPS. Important for cell envelope stability and essential for growth, cell viability and ability to cause infection in different animal models. This Pseudomonas aeruginosa (strain ATCC 15692 / DSM 22644 / CIP 104116 / JCM 14847 / LMG 12228 / 1C / PRS 101 / PAO1) protein is Lipopolysaccharide export system protein LptH.